A 920-amino-acid polypeptide reads, in one-letter code: Anoctamin-4 (920 aa).

The Cytoplasmic portion of the chain corresponds to M1–T323. The tract at residues K38–E64 is disordered. The helical transmembrane segment at G324–L344 threads the bilayer. Over D345 to N389 the chain is Extracellular. Residues G390–W410 traverse the membrane as a helical segment. The Cytoplasmic portion of the chain corresponds to K411–S470. A helical transmembrane segment spans residues A471–Y491. At R492–Q512 the chain is on the extracellular side. The N-linked (GlcNAc...) asparagine glycan is linked to N509. The helical transmembrane segment at V513 to L533 threads the bilayer. Topologically, residues Y534–K560 are cytoplasmic. A helical membrane pass occupies residues M561–G581. Over R582–E680 the chain is Extracellular. A helical transmembrane segment spans residues M681–L701. Residues A702–G733 lie on the Cytoplasmic side of the membrane. A helical membrane pass occupies residues I734–I754. The Extracellular segment spans residues A755–L850. 2 N-linked (GlcNAc...) asparagine glycosylation sites follow: N789 and N802. A helical membrane pass occupies residues A851 to I871. Residues P872–P920 are Cytoplasmic-facing.

The protein belongs to the anoctamin family.

The protein resides in the cell membrane. The enzyme catalyses a 1,2-diacyl-sn-glycero-3-phospho-L-serine(in) = a 1,2-diacyl-sn-glycero-3-phospho-L-serine(out). It catalyses the reaction a beta-D-galactosyl-(1&lt;-&gt;1')-N-acylsphing-4-enine(out) = a beta-D-galactosyl-(1&lt;-&gt;1')-N-acylsphing-4-enine(in). It carries out the reaction a 1,2-diacyl-sn-glycero-3-phosphocholine(in) = a 1,2-diacyl-sn-glycero-3-phosphocholine(out). In terms of biological role, has calcium-dependent phospholipid scramblase activity; scrambles phosphatidylserine, phosphatidylcholine and galactosylceramide. Does not exhibit calcium-activated chloride channel (CaCC) activity. This chain is Anoctamin-4, found in Bos taurus (Bovine).